The sequence spans 376 residues: Succinyl-diaminopimelate desuccinylase (376 aa).

Position 67 (H67) interacts with Zn(2+). The active site involves D69. D100 is a Zn(2+) binding site. Catalysis depends on E134, which acts as the Proton acceptor. Residues E135, E163, and H349 each contribute to the Zn(2+) site.

This sequence belongs to the peptidase M20A family. DapE subfamily. As to quaternary structure, homodimer. The cofactor is Zn(2+). Co(2+) is required as a cofactor.

It catalyses the reaction N-succinyl-(2S,6S)-2,6-diaminopimelate + H2O = (2S,6S)-2,6-diaminopimelate + succinate. It functions in the pathway amino-acid biosynthesis; L-lysine biosynthesis via DAP pathway; LL-2,6-diaminopimelate from (S)-tetrahydrodipicolinate (succinylase route): step 3/3. Functionally, catalyzes the hydrolysis of N-succinyl-L,L-diaminopimelic acid (SDAP), forming succinate and LL-2,6-diaminopimelate (DAP), an intermediate involved in the bacterial biosynthesis of lysine and meso-diaminopimelic acid, an essential component of bacterial cell walls. The polypeptide is Succinyl-diaminopimelate desuccinylase (Nitrosomonas europaea (strain ATCC 19718 / CIP 103999 / KCTC 2705 / NBRC 14298)).